The primary structure comprises 177 residues: Large ribosomal subunit protein uL22 (177 aa).

Positions 118 to 177 (VESRPSREGRRGGAGESAGGARARRAQGSKAAAAKKAPASSSKKAATTTEASEEAKGGSQ) are disordered. Residues 121–130 (RPSREGRRGG) show a composition bias toward basic and acidic residues. Positions 145–167 (GSKAAAAKKAPASSSKKAATTTE) are enriched in low complexity.

This sequence belongs to the universal ribosomal protein uL22 family. Part of the 50S ribosomal subunit.

This protein binds specifically to 23S rRNA; its binding is stimulated by other ribosomal proteins, e.g. L4, L17, and L20. It is important during the early stages of 50S assembly. It makes multiple contacts with different domains of the 23S rRNA in the assembled 50S subunit and ribosome. Its function is as follows. The globular domain of the protein is located near the polypeptide exit tunnel on the outside of the subunit, while an extended beta-hairpin is found that lines the wall of the exit tunnel in the center of the 70S ribosome. The protein is Large ribosomal subunit protein uL22 of Mycobacterium sp. (strain KMS).